Here is a 291-residue protein sequence, read N- to C-terminus: Protease HtpX homolog (291 aa).

2 helical membrane-spanning segments follow: residues 4–24 (IVLF…TMRL) and 39–59 (TSLL…SLAI). Residue histidine 145 participates in Zn(2+) binding. Glutamate 146 is a catalytic residue. Histidine 149 provides a ligand contact to Zn(2+). 2 helical membrane passes run 156–176 (VTLA…SRII) and 195–215 (FFVT…IIVM). Glutamate 222 lines the Zn(2+) pocket.

The protein belongs to the peptidase M48B family. Zn(2+) serves as cofactor.

Its subcellular location is the cell inner membrane. This Thiobacillus denitrificans (strain ATCC 25259 / T1) protein is Protease HtpX homolog.